Consider the following 471-residue polypeptide: 3-isopropylmalate dehydratase large subunit (471 aa).

Cysteine 346, cysteine 406, and cysteine 409 together coordinate [4Fe-4S] cluster.

The protein belongs to the aconitase/IPM isomerase family. LeuC type 1 subfamily. As to quaternary structure, heterodimer of LeuC and LeuD. [4Fe-4S] cluster is required as a cofactor.

The catalysed reaction is (2R,3S)-3-isopropylmalate = (2S)-2-isopropylmalate. Its pathway is amino-acid biosynthesis; L-leucine biosynthesis; L-leucine from 3-methyl-2-oxobutanoate: step 2/4. In terms of biological role, catalyzes the isomerization between 2-isopropylmalate and 3-isopropylmalate, via the formation of 2-isopropylmaleate. The polypeptide is 3-isopropylmalate dehydratase large subunit (Bacillus pumilus (strain SAFR-032)).